Here is a 189-residue protein sequence, read N- to C-terminus: Small ribosomal subunit protein uS5 (189 aa).

Positions 22–85 (FVDKLVAINR…ESAKRDLIFV (64 aa)) constitute an S5 DRBM domain.

This sequence belongs to the universal ribosomal protein uS5 family. In terms of assembly, part of the 30S ribosomal subunit. Contacts proteins S4 and S8.

Functionally, with S4 and S12 plays an important role in translational accuracy. Located at the back of the 30S subunit body where it stabilizes the conformation of the head with respect to the body. This is Small ribosomal subunit protein uS5 from Agrobacterium fabrum (strain C58 / ATCC 33970) (Agrobacterium tumefaciens (strain C58)).